Here is a 392-residue protein sequence, read N- to C-terminus: L-rhamnonate dehydratase (392 aa).

Histidine 22 and arginine 48 together coordinate substrate. Residues aspartate 214, glutamate 240, and glutamate 268 each coordinate Mg(2+). Catalysis depends on histidine 318, which acts as the Proton acceptor. Residue glutamate 338 participates in substrate binding.

It belongs to the mandelate racemase/muconate lactonizing enzyme family. RhamD subfamily. In terms of assembly, homooctamer; tetramer of dimers. Mg(2+) is required as a cofactor.

It catalyses the reaction L-rhamnonate = 2-dehydro-3-deoxy-L-rhamnonate + H2O. Catalyzes the dehydration of L-rhamnonate to 2-keto-3-deoxy-L-rhamnonate (KDR). This is L-rhamnonate dehydratase from Paraburkholderia phytofirmans (strain DSM 17436 / LMG 22146 / PsJN) (Burkholderia phytofirmans).